The primary structure comprises 301 residues: Protoheme IX farnesyltransferase 1 (301 aa).

9 consecutive transmembrane segments (helical) span residues 29-49 (VVALMLLTVLVGMCLAVPHAV), 51-71 (VQPLLAGMLGIAMMAGSAAAL), 101-121 (ALIFAASLGSLGFIVLYSLVN), 123-143 (LTAWLTFASLIGYALVYTAYL), 150-170 (NIVIGGLAGAMPPLLGWTAVT), 177-197 (ALLLVIIIFTWTPPHFWALAI), 223-243 (CILLYTVLLAIACLLPVLVGM), 244-264 (CGPVYFVCSSLLSTGFIYKAW), and 275-295 (AMQVFRFSIYHLMLLFMALLL).

Belongs to the UbiA prenyltransferase family. Protoheme IX farnesyltransferase subfamily.

It localises to the cell inner membrane. The enzyme catalyses heme b + (2E,6E)-farnesyl diphosphate + H2O = Fe(II)-heme o + diphosphate. Its pathway is porphyrin-containing compound metabolism; heme O biosynthesis; heme O from protoheme: step 1/1. Functionally, converts heme B (protoheme IX) to heme O by substitution of the vinyl group on carbon 2 of heme B porphyrin ring with a hydroxyethyl farnesyl side group. This Shewanella baltica (strain OS185) protein is Protoheme IX farnesyltransferase 1.